The sequence spans 103 residues: MKGREYEDLAARYLKSKGYQILGRNLRSPYGEIDILAEFEGRKVIVEVKGSETFFPAEKVTPHKLSKIIRTAYEVLGEEPFSIEVVVVYRGKVYHYKDLGLEL.

Belongs to the UPF0102 family.

This Aquifex aeolicus (strain VF5) protein is UPF0102 protein aq_041.